Reading from the N-terminus, the 275-residue chain is NH(3)-dependent NAD(+) synthetase (275 aa).

46-53 serves as a coordination point for ATP; sequence GISGGQDS. Mg(2+) is bound at residue D52. R140 contacts deamido-NAD(+). T160 is a binding site for ATP. Mg(2+) is bound at residue E165. Residues K173 and D180 each coordinate deamido-NAD(+). ATP-binding residues include K189 and T211. A deamido-NAD(+)-binding site is contributed by 260–261; that stretch reads HK.

It belongs to the NAD synthetase family. In terms of assembly, homodimer.

The enzyme catalyses deamido-NAD(+) + NH4(+) + ATP = AMP + diphosphate + NAD(+) + H(+). It participates in cofactor biosynthesis; NAD(+) biosynthesis; NAD(+) from deamido-NAD(+) (ammonia route): step 1/1. Its function is as follows. Catalyzes the ATP-dependent amidation of deamido-NAD to form NAD. Uses ammonia as a nitrogen source. This is NH(3)-dependent NAD(+) synthetase from Salmonella heidelberg (strain SL476).